The following is a 238-amino-acid chain: Flagellar L-ring protein (238 aa).

The N-terminal stretch at 1–17 (MIRKTLAASCAVLLMAG) is a signal peptide. Cys-18 carries N-palmitoyl cysteine lipidation. A lipid anchor (S-diacylglycerol cysteine) is attached at Cys-18.

The protein belongs to the FlgH family. The basal body constitutes a major portion of the flagellar organelle and consists of four rings (L,P,S, and M) mounted on a central rod.

The protein localises to the cell outer membrane. Its subcellular location is the bacterial flagellum basal body. Its function is as follows. Assembles around the rod to form the L-ring and probably protects the motor/basal body from shearing forces during rotation. This chain is Flagellar L-ring protein, found in Nitratidesulfovibrio vulgaris (strain ATCC 29579 / DSM 644 / CCUG 34227 / NCIMB 8303 / VKM B-1760 / Hildenborough) (Desulfovibrio vulgaris).